The sequence spans 379 residues: 3-dehydroquinate synthase (379 aa).

NAD(+) is bound by residues 67 to 72 (PGEKNK), 101 to 105 (GIVLD), 125 to 126 (TT), Lys-138, and Lys-147. Zn(2+)-binding residues include Glu-180, His-242, and His-258.

This sequence belongs to the sugar phosphate cyclases superfamily. Dehydroquinate synthase family. The cofactor is NAD(+). Co(2+) serves as cofactor. Requires Zn(2+) as cofactor.

It is found in the cytoplasm. It carries out the reaction 7-phospho-2-dehydro-3-deoxy-D-arabino-heptonate = 3-dehydroquinate + phosphate. Its pathway is metabolic intermediate biosynthesis; chorismate biosynthesis; chorismate from D-erythrose 4-phosphate and phosphoenolpyruvate: step 2/7. Functionally, catalyzes the conversion of 3-deoxy-D-arabino-heptulosonate 7-phosphate (DAHP) to dehydroquinate (DHQ). This Chlamydia felis (strain Fe/C-56) (Chlamydophila felis) protein is 3-dehydroquinate synthase.